A 374-amino-acid chain; its full sequence is Tryptophan--tRNA ligase (374 aa).

The 'HIGH' region signature appears at 71 to 79; sequence PSGRMHLGH. The 'KMSKS' region signature appears at 247–251; sequence KMSSS.

It belongs to the class-I aminoacyl-tRNA synthetase family.

It localises to the cytoplasm. The enzyme catalyses tRNA(Trp) + L-tryptophan + ATP = L-tryptophyl-tRNA(Trp) + AMP + diphosphate + H(+). The chain is Tryptophan--tRNA ligase from Methanopyrus kandleri (strain AV19 / DSM 6324 / JCM 9639 / NBRC 100938).